The following is a 240-amino-acid chain: Putative exosome complex component RRP41 (240 aa).

It belongs to the RNase PH family. Component of the RNA exosome complex.

It is found in the cytoplasm. It localises to the nucleus. The protein localises to the nucleolus. Its subcellular location is the nucleoplasm. Functionally, non-catalytic component of the RNA exosome complex which has 3'-&gt;5' exoribonuclease activity and participates in a multitude of cellular RNA processing and degradation events. In Caenorhabditis briggsae, this protein is Putative exosome complex component RRP41 (exos-4.1).